Consider the following 208-residue polypeptide: MKTTVTDALYAGCEAVVKIAWLNGLWLLFTLLGGVLFGWAPSTAAMCAVIRKWLMGQKDVPIFSLFLDTYKKEFLKVNAIGLAFSALLLILSANYHYFSASTNWLSFAVTSCTLLAGLLYIIALMYVFPLYVHYQLPLRKYIPQALLFGAMRPLTTGCMLIGCGFVLYLLYTLPGLIPFYGPCLFGLVLMFFALRGFQKTEAQHHQAG.

This is an uncharacterized protein from Bacillus subtilis (strain 168).